Consider the following 318-residue polypeptide: MQNRNFFEYPKNWIILLIPIFTTFNLLFTSDCYAFPIYAQQNYENPREATGRIVCANCHLAKGPVDIEVPKTVFPDTVFEAVVKIPYDTQIKQVLANGKKGGLNVGAVLILPEGFQLAPSDRIPAEIKEKIGNLAFQPYSEDKKNLLVIGPIPGKTYQEIIFPILSPDPNVNKESNFLKYPIYVGGNRGRGQVYPDGSKSNNNVFNSPATGKITKIVDNKKAGFELSITTVDGSSIVEIIPPGATFLVSEGDSVKIDQPLTTNPNVGGFGQADGEIVLQDPARLQGLLVFLFLVVLAQVFLVLKKKQYEKVQLAEMNF.

An N-terminal signal peptide occupies residues 1–34 (MQNRNFFEYPKNWIILLIPIFTTFNLLFTSDCYA). Residues Phe35, Cys55, Cys58, and His59 each coordinate heme. The chain crosses the membrane as a helical span at residues 284 to 303 (LQGLLVFLFLVVLAQVFLVL).

Belongs to the cytochrome f family. As to quaternary structure, the 4 large subunits of the cytochrome b6-f complex are cytochrome b6, subunit IV (17 kDa polypeptide, petD), cytochrome f and the Rieske protein, while the 4 small subunits are PetG, PetL, PetM and PetN. The complex functions as a dimer. It depends on heme as a cofactor.

Its subcellular location is the plastid. It is found in the chloroplast thylakoid membrane. Component of the cytochrome b6-f complex, which mediates electron transfer between photosystem II (PSII) and photosystem I (PSI), cyclic electron flow around PSI, and state transitions. The chain is Cytochrome f from Chaetosphaeridium globosum (Charophycean green alga).